A 215-amino-acid chain; its full sequence is Oligoribonuclease (215 aa).

The region spanning 5 to 170 is the Exonuclease domain; sequence LVWIDCEMTG…ADIHESIREL (166 aa). The active site involves tyrosine 127.

It belongs to the oligoribonuclease family.

The protein resides in the cytoplasm. 3'-to-5' exoribonuclease specific for small oligoribonucleotides. This Mycobacterium ulcerans (strain Agy99) protein is Oligoribonuclease.